We begin with the raw amino-acid sequence, 361 residues long: Phospho-N-acetylmuramoyl-pentapeptide-transferase (361 aa).

The next 10 membrane-spanning stretches (helical) occupy residues 28–48 (LAVL…IKFL), 74–94 (TMGG…LADL), 99–119 (IWIT…DDYA), 135–155 (LLLQ…TIDS), 167–187 (SLSM…IVGA), 203–223 (VPIA…GNLI), 236–256 (TGEL…FLWF), 263–283 (VFMG…ISVI), 288–308 (IVLG…IMQV), and 338–358 (KVVI…LSSL).

It belongs to the glycosyltransferase 4 family. MraY subfamily. Mg(2+) is required as a cofactor.

The protein resides in the cell inner membrane. It catalyses the reaction UDP-N-acetyl-alpha-D-muramoyl-L-alanyl-gamma-D-glutamyl-meso-2,6-diaminopimeloyl-D-alanyl-D-alanine + di-trans,octa-cis-undecaprenyl phosphate = di-trans,octa-cis-undecaprenyl diphospho-N-acetyl-alpha-D-muramoyl-L-alanyl-D-glutamyl-meso-2,6-diaminopimeloyl-D-alanyl-D-alanine + UMP. It functions in the pathway cell wall biogenesis; peptidoglycan biosynthesis. Functionally, catalyzes the initial step of the lipid cycle reactions in the biosynthesis of the cell wall peptidoglycan: transfers peptidoglycan precursor phospho-MurNAc-pentapeptide from UDP-MurNAc-pentapeptide onto the lipid carrier undecaprenyl phosphate, yielding undecaprenyl-pyrophosphoryl-MurNAc-pentapeptide, known as lipid I. This Rickettsia bellii (strain RML369-C) protein is Phospho-N-acetylmuramoyl-pentapeptide-transferase.